A 291-amino-acid chain; its full sequence is Protease HtpX homolog (291 aa).

Transmembrane regions (helical) follow at residues 4–24 (IVLF…SARL) and 38–58 (MGML…ISLM). Residue His-144 participates in Zn(2+) binding. Glu-145 is an active-site residue. His-148 is a Zn(2+) binding site. A run of 2 helical transmembrane segments spans residues 152 to 172 (GDMV…IFLA) and 199 to 219 (VSSI…VMFF). Glu-224 contacts Zn(2+).

Belongs to the peptidase M48B family. The cofactor is Zn(2+).

It is found in the cell inner membrane. The protein is Protease HtpX homolog of Prosthecochloris aestuarii (strain DSM 271 / SK 413).